Consider the following 360-residue polypeptide: Phospho-N-acetylmuramoyl-pentapeptide-transferase (360 aa).

The next 10 helical transmembrane spans lie at 21-41 (YLTF…LWIG), 71-91 (TPTM…ILWA), 94-114 (SNPY…IGFI), 142-162 (LVVA…VLVV), 168-188 (IMPQ…VGAS), 199-219 (GLAI…AWAT), 236-256 (ASEL…FLWF), 263-283 (VFMG…IAVL), 288-308 (FLLF…ILQV), and 338-358 (VIVR…VTLK).

This sequence belongs to the glycosyltransferase 4 family. MraY subfamily. The cofactor is Mg(2+).

It is found in the cell inner membrane. The catalysed reaction is UDP-N-acetyl-alpha-D-muramoyl-L-alanyl-gamma-D-glutamyl-meso-2,6-diaminopimeloyl-D-alanyl-D-alanine + di-trans,octa-cis-undecaprenyl phosphate = di-trans,octa-cis-undecaprenyl diphospho-N-acetyl-alpha-D-muramoyl-L-alanyl-D-glutamyl-meso-2,6-diaminopimeloyl-D-alanyl-D-alanine + UMP. Its pathway is cell wall biogenesis; peptidoglycan biosynthesis. Functionally, catalyzes the initial step of the lipid cycle reactions in the biosynthesis of the cell wall peptidoglycan: transfers peptidoglycan precursor phospho-MurNAc-pentapeptide from UDP-MurNAc-pentapeptide onto the lipid carrier undecaprenyl phosphate, yielding undecaprenyl-pyrophosphoryl-MurNAc-pentapeptide, known as lipid I. The protein is Phospho-N-acetylmuramoyl-pentapeptide-transferase of Tolumonas auensis (strain DSM 9187 / NBRC 110442 / TA 4).